The sequence spans 316 residues: MKRFHSHFNGYSVEFSPFEEQRLACVTSQHFGIIGNGRQYILDVLDRDIGAFKTFDTRDGLYDCTWSEENECHVASSSGDGSIKIWDTQAPSGGRPIKSFEEHTKEVYSVDWNLVTKDTFITGSWDQSIKIWNPRMDRSLKTFREHRYCIYSAIWSPRNAHLFASVSGDRTLKIWDSRDNRSLNTIKAHDHEILTCDWNKYNDKEVVTGSVDKTIRIWDIRYPDRPTTILRGHTYAVRRIKCSPHSESMLASCSYDMSVIVWDRAREQDPIIARMDHHTEFVVGLDWNMFIDGQMASCSWDEQVCVWNLGRPGQFR.

WD repeat units lie at residues 56 to 96, 102 to 142, 145 to 185, 188 to 228, 232 to 272, and 277 to 316; these read DTRD…GGRP, EHTK…SLKT, EHRY…SLNT, AHDH…RPTT, GHTY…DPII, and HHTE…GQFR.

The protein belongs to the WD repeat peroxin-7 family. In terms of assembly, interacts with PEX5; interaction only takes place when PEX7 is associated with cargo proteins.

It localises to the cytoplasm. The protein resides in the cytosol. Its subcellular location is the peroxisome matrix. Receptor required for the peroxisomal import of proteins containing a C-terminal PTS2-type peroxisomal targeting signal. Specifically binds to cargo proteins containing a PTS2 peroxisomal targeting signal in the cytosol. Cargo protein-binding triggers interaction with PEX5 and formation of a ternary complex composed of PEX5 and PEX7 along with PTS2-containing cargo proteins, which is tranlocated into peroxisomes by passing through the PEX13-PEX14 docking complex. In Dictyostelium discoideum (Social amoeba), this protein is Peroxisomal targeting signal 2 receptor (pex7).